The chain runs to 116 residues: Large ribosomal subunit protein bL17 (116 aa).

The protein belongs to the bacterial ribosomal protein bL17 family. As to quaternary structure, part of the 50S ribosomal subunit. Contacts protein L32.

The protein is Large ribosomal subunit protein bL17 of Trichormus variabilis (strain ATCC 29413 / PCC 7937) (Anabaena variabilis).